The following is a 394-amino-acid chain: Elongation factor Tu (394 aa).

In terms of domain architecture, tr-type G spans 10-204; the sequence is KPHVNIGTIG…AVDSYIPQPV (195 aa). The G1 stretch occupies residues 19 to 26; sequence GHVDHGKT. GTP is bound at residue 19 to 26; that stretch reads GHVDHGKT. Thr26 is a Mg(2+) binding site. Residues 60-64 are G2; sequence GITIS. Residues 81 to 84 form a G3 region; that stretch reads DCPG. Residues 81–85 and 136–139 contribute to the GTP site; these read DCPGH and NKVD. The tract at residues 136-139 is G4; it reads NKVD. A G5 region spans residues 174-176; that stretch reads SAL.

The protein belongs to the TRAFAC class translation factor GTPase superfamily. Classic translation factor GTPase family. EF-Tu/EF-1A subfamily. In terms of assembly, monomer.

It localises to the cytoplasm. The catalysed reaction is GTP + H2O = GDP + phosphate + H(+). In terms of biological role, GTP hydrolase that promotes the GTP-dependent binding of aminoacyl-tRNA to the A-site of ribosomes during protein biosynthesis. This Rickettsia massiliae (strain Mtu5) protein is Elongation factor Tu.